The chain runs to 288 residues: UDP-3-O-acyl-N-acetylglucosamine deacetylase (288 aa).

Residues His-79, His-236, and Asp-240 each contribute to the Zn(2+) site. The Proton donor role is filled by His-263.

This sequence belongs to the LpxC family. It depends on Zn(2+) as a cofactor.

It catalyses the reaction a UDP-3-O-[(3R)-3-hydroxyacyl]-N-acetyl-alpha-D-glucosamine + H2O = a UDP-3-O-[(3R)-3-hydroxyacyl]-alpha-D-glucosamine + acetate. Its pathway is glycolipid biosynthesis; lipid IV(A) biosynthesis; lipid IV(A) from (3R)-3-hydroxytetradecanoyl-[acyl-carrier-protein] and UDP-N-acetyl-alpha-D-glucosamine: step 2/6. Catalyzes the hydrolysis of UDP-3-O-myristoyl-N-acetylglucosamine to form UDP-3-O-myristoylglucosamine and acetate, the committed step in lipid A biosynthesis. The sequence is that of UDP-3-O-acyl-N-acetylglucosamine deacetylase from Rickettsia conorii (strain ATCC VR-613 / Malish 7).